A 337-amino-acid polypeptide reads, in one-letter code: tRNA N6-adenosine threonylcarbamoyltransferase (337 aa).

Fe cation is bound by residues His111 and His115. Substrate contacts are provided by residues 134–138 (LVSGG), Asp167, Gly180, and Asn272. Residue Asp300 coordinates Fe cation.

Belongs to the KAE1 / TsaD family. Fe(2+) is required as a cofactor.

It is found in the cytoplasm. The enzyme catalyses L-threonylcarbamoyladenylate + adenosine(37) in tRNA = N(6)-L-threonylcarbamoyladenosine(37) in tRNA + AMP + H(+). In terms of biological role, required for the formation of a threonylcarbamoyl group on adenosine at position 37 (t(6)A37) in tRNAs that read codons beginning with adenine. Is involved in the transfer of the threonylcarbamoyl moiety of threonylcarbamoyl-AMP (TC-AMP) to the N6 group of A37, together with TsaE and TsaB. TsaD likely plays a direct catalytic role in this reaction. In Escherichia coli O139:H28 (strain E24377A / ETEC), this protein is tRNA N6-adenosine threonylcarbamoyltransferase.